Reading from the N-terminus, the 98-residue chain is Large ribosomal subunit protein bL27 (98 aa).

A disordered region spans residues 1 to 22; the sequence is MAHKKGTGSTRNGRDSNAQRLG. Residues 7–19 are compositionally biased toward polar residues; the sequence is TGSTRNGRDSNAQ.

The protein belongs to the bacterial ribosomal protein bL27 family.

This Nostoc punctiforme (strain ATCC 29133 / PCC 73102) protein is Large ribosomal subunit protein bL27.